The sequence spans 33 residues: rho operon leader peptide (33 aa).

Over residues 1–25 (MRSEQISGSSLNPSCRFSSAYSPVT) the composition is skewed to polar residues. The tract at residues 1 to 33 (MRSEQISGSSLNPSCRFSSAYSPVTRQRKDMSR) is disordered.

The chain is rho operon leader peptide (rhoL) from Escherichia coli O157:H7.